A 133-amino-acid chain; its full sequence is MSEKVQKSEHEWQQQLTPEQYRVTREKGTERPFTGDYQVSDEQGIYHCVCCGAPLFENEHKFDAGCGWPSFDRPLADASIEEHLDTSHGMRRIEVTCRRCDSHLGHVFPDGPQDTTGLRYCINSVSLDFHPGE.

The span at 1–12 (MSEKVQKSEHEW) shows a compositional bias: basic and acidic residues. Residues 1-36 (MSEKVQKSEHEWQQQLTPEQYRVTREKGTERPFTGD) form a disordered region. Residues 9-132 (EHEWQQQLTP…NSVSLDFHPG (124 aa)) enclose the MsrB domain. Positions 48, 51, 97, and 100 each coordinate Zn(2+). The active-site Nucleophile is the Cys121.

This sequence belongs to the MsrB Met sulfoxide reductase family. Zn(2+) is required as a cofactor.

The enzyme catalyses L-methionyl-[protein] + [thioredoxin]-disulfide + H2O = L-methionyl-(R)-S-oxide-[protein] + [thioredoxin]-dithiol. This is Peptide methionine sulfoxide reductase MsrB from Chromohalobacter salexigens (strain ATCC BAA-138 / DSM 3043 / CIP 106854 / NCIMB 13768 / 1H11).